The chain runs to 226 residues: Ribonuclease 3 (226 aa).

In terms of domain architecture, RNase III spans 6 to 128 (INRLQRKLGY…LIGGVFLDSD (123 aa)). A Mg(2+)-binding site is contributed by Glu-41. The active site involves Asp-45. Positions 114 and 117 each coordinate Mg(2+). The active site involves Glu-117. The region spanning 155-225 (DPKTRLQEFL…AEQALIKLEL (71 aa)) is the DRBM domain.

It belongs to the ribonuclease III family. As to quaternary structure, homodimer. Requires Mg(2+) as cofactor.

It localises to the cytoplasm. It carries out the reaction Endonucleolytic cleavage to 5'-phosphomonoester.. In terms of biological role, digests double-stranded RNA. Involved in the processing of primary rRNA transcript to yield the immediate precursors to the large and small rRNAs (23S and 16S). Processes some mRNAs, and tRNAs when they are encoded in the rRNA operon. Processes pre-crRNA and tracrRNA of type II CRISPR loci if present in the organism. The polypeptide is Ribonuclease 3 (Serratia proteamaculans (strain 568)).